A 304-amino-acid polypeptide reads, in one-letter code: Killer cell immunoglobulin-like receptor 2DS4 (304 aa).

Residues 1–21 (MSLMVIIMACVGFFLLQGAWP) form the signal peptide. At 22 to 245 (QEGVHRKPSF…SKTGNPRHLH (224 aa)) the chain is on the extracellular side. 2 consecutive Ig-like C2-type domains span residues 42–107 (EETV…VPHS) and 142–205 (GENV…FRDA). Cysteines 49 and 100 form a disulfide. Asparagine 67, asparagine 84, asparagine 144, asparagine 178, and asparagine 211 each carry an N-linked (GlcNAc...) asparagine glycan. Cysteine 149 and cysteine 198 are disulfide-bonded. Residues 220–239 (VTGNPSNSWPSPTEPSSKTG) are disordered. Residues 246 to 265 (VLIGTSVVKIPFTILLFFLL) form a helical membrane-spanning segment. Over 266–304 (HRWCSDKKNAAVMDQEPAGNRTVNSEDSDEQDHQEVSYA) the chain is Cytoplasmic. The interval 280-304 (QEPAGNRTVNSEDSDEQDHQEVSYA) is disordered.

Belongs to the immunoglobulin superfamily. As to quaternary structure, interacts with HLA-F; this interaction is direct.

It is found in the cell membrane. Receptor on natural killer (NK) cells for HLA-C alleles. Does not inhibit the activity of NK cells. The chain is Killer cell immunoglobulin-like receptor 2DS4 from Homo sapiens (Human).